The sequence spans 87 residues: U3-theraphotoxin-Hhn1f (87 aa).

The N-terminal stretch at 1–24 (MVNMKASMFLTSAGLVLLFVVCYA) is a signal peptide. The propeptide occupies 25–52 (SESEEKEFPKEMLSSIFAVDNDFKQEER). 3 disulfide bridges follow: cysteine 54-cysteine 67, cysteine 61-cysteine 72, and cysteine 66-cysteine 79.

This sequence belongs to the neurotoxin 10 (Hwtx-1) family. 51 (Hntx-8) subfamily. Hntx-8 sub-subfamily. As to expression, expressed by the venom gland.

The protein localises to the secreted. Functionally, ion channel inhibitor. The chain is U3-theraphotoxin-Hhn1f from Cyriopagopus hainanus (Chinese bird spider).